The following is a 788-amino-acid chain: Calpastatin (788 aa).

A compositionally biased stretch (pro residues) spans 1–11 (MSQPGPKPAAS). 3 disordered regions span residues 1 to 262 (MSQP…TGPV), 289 to 493 (LLEK…MCSI), and 514 to 580 (TLAG…SQEQ). Residue Ser11 is modified to Phosphoserine. The segment covering 12–21 (PRPSRGAAAR) has biased composition (low complexity). Basic and acidic residues predominate over residues 38-49 (PGEKKGSDEKKA). The span at 65–87 (AATATKVTASSAATSKSPSMSTT) shows a compositional bias: low complexity. Residues 99–119 (EGPDQKRPREQAVKTESKKPQ) are compositionally biased toward basic and acidic residues. A Glycyl lysine isopeptide (Lys-Gly) (interchain with G-Cter in SUMO2) cross-link involves residue Lys112. N6-acetyllysine is present on Lys129. Residue Ser165 is modified to Phosphoserine. Residue Thr216 is modified to Phosphothreonine. Ser219 bears the Phosphoserine mark. A compositionally biased stretch (basic and acidic residues) spans 246–256 (GGHEDTNRDDP). The stretch at 251 to 303 (TNRDDPPYTGPVVLDPMYSTYLEALGIKEGTIPPEYRKLLEKNEGITQPLPDS) is one Inhibitory domain 1 repeat. Phosphoserine occurs at positions 303 and 324. Polar residues-rich tracts occupy residues 318-328 (SDFTCSSPTGK) and 369-380 (QALQALSDSLGT). Residues 384 to 436 (DPPSHVSQAEQVKEAKAKEERQEKCGEDEDTVPAEYRLKPAKDKDGKPLLPEP) form an Inhibitory domain 2 repeat. Basic and acidic residues-rich tracts occupy residues 394–408 (QVKE…QEKC) and 419–430 (YRLKPAKDKDGK). Over residues 441–453 (KSLSESELIGELS) the composition is skewed to low complexity. 3 positions are modified to phosphoserine: Ser444, Ser446, and Ser453. Thr479 carries the phosphothreonine modification. Ser518 is modified (phosphoserine). Basic and acidic residues predominate over residues 522-570 (READPEHEKTVEDKVKEKAKEEEHEKLGEKEETVPPDYRLEEVKDKDGK). An Inhibitory domain 3 repeat occupies 524–577 (ADPEHEKTVEDKVKEKAKEEEHEKLGEKEETVPPDYRLEEVKDKDGKPLLPKES). Phosphoserine occurs at positions 594, 605, 653, and 655. Residues 620 to 788 (VVSQTPAPST…PKAKEDARHS (169 aa)) form a disordered region. The Inhibitory domain 4 repeat unit spans residues 661 to 714 (PDPDENKPLDDKVKEKIKPEHSEKLGERDDTIPPEYRHLLDNDGKDKPEKPPTK). Basic and acidic residues-rich tracts occupy residues 661–726 (PDPD…RDPI) and 759–788 (ASKD…ARHS).

It belongs to the protease inhibitor I27 (calpastatin) family. Isoform 2 is the major form in all tissues examined. Isoform 1 accounts for 5-10% in tissues such as skeletal muscle, liver and brain, and 30% in myoblasts. Isoforms 4 and 5 are testis-specific. Isoform 6 is highly expressed in heart and skeletal muscle with lower levels in liver, brain and testis. Isoform 7 is expressed at high levels in liver.

Its function is as follows. Specific inhibition of calpain (calcium-dependent cysteine protease). Plays a key role in postmortem tenderization of meat and have been proposed to be involved in muscle protein degradation in living tissue. The sequence is that of Calpastatin (Cast) from Mus musculus (Mouse).